The primary structure comprises 439 residues: 3-phosphoshikimate 1-carboxyvinyltransferase (439 aa).

3-phosphoshikimate-binding residues include lysine 25, serine 26, and arginine 30. A phosphoenolpyruvate-binding site is contributed by lysine 25. 2 residues coordinate phosphoenolpyruvate: glycine 96 and arginine 124. 3-phosphoshikimate-binding residues include serine 170, serine 171, glutamine 172, serine 202, aspartate 324, and lysine 351. Residue glutamine 172 participates in phosphoenolpyruvate binding. Catalysis depends on aspartate 324, which acts as the Proton acceptor. Phosphoenolpyruvate contacts are provided by arginine 355, arginine 399, and lysine 424.

This sequence belongs to the EPSP synthase family. As to quaternary structure, monomer.

The protein resides in the cytoplasm. It carries out the reaction 3-phosphoshikimate + phosphoenolpyruvate = 5-O-(1-carboxyvinyl)-3-phosphoshikimate + phosphate. Its pathway is metabolic intermediate biosynthesis; chorismate biosynthesis; chorismate from D-erythrose 4-phosphate and phosphoenolpyruvate: step 6/7. Its function is as follows. Catalyzes the transfer of the enolpyruvyl moiety of phosphoenolpyruvate (PEP) to the 5-hydroxyl of shikimate-3-phosphate (S3P) to produce enolpyruvyl shikimate-3-phosphate and inorganic phosphate. The polypeptide is 3-phosphoshikimate 1-carboxyvinyltransferase (Bordetella avium (strain 197N)).